A 176-amino-acid polypeptide reads, in one-letter code: Protein CURLY FLAG LEAF 2 (176 aa).

Residues 41-46 carry the EAR motif; sequence FLELSS. The region spanning 48 to 82 is the WW domain; the sequence is FSVPSHLEQCLDLKTGEIYYRSWNSGMRVKEDPRK. 2 disordered regions span residues 77-106 and 111-130; these read KEDPRKSMSRGNYADQSSGESSGTVFSSEE and YESEESSSESSPSSRKYHKE. The span at 93–106 shows a compositional bias: low complexity; that stretch reads SSGESSGTVFSSEE.

As to quaternary structure, may interact with BHLH122/CFLAP1 and BHLH80/CFLAP2.

May negatively regulate the cuticle development by interacting with the HD-ZIP IV transcription factor HDG1. This chain is Protein CURLY FLAG LEAF 2, found in Arabidopsis thaliana (Mouse-ear cress).